The primary structure comprises 123 residues: MASLKKSLFLVLFLGLVSLSICEEKKRENEDDAEDENHEEESEEKRGLLDFAKHVIGIASKLGKRSEEKRYHPFGKRSEEKRYFPIPFGKRSEEKRYFPIPIGKRSEEKRYFPIPIGKKKKKK.

An N-terminal signal peptide occupies residues 1–22; it reads MASLKKSLFLVLFLGLVSLSIC. A propeptide spanning residues 23-46 is cleaved from the precursor; sequence EEKKRENEDDAEDENHEEESEEKR. The tract at residues 26–46 is disordered; sequence KRENEDDAEDENHEEESEEKR. Residues 30-42 are compositionally biased toward acidic residues; sequence EDDAEDENHEEES. Leucine 62 is subject to Leucine amide. A propeptide spanning residues 66 to 70 is cleaved from the precursor; it reads SEEKR. Phenylalanine 74 bears the Phenylalanine amide mark. Positions 78 to 82 are excised as a propeptide; sequence SEEKR. Residue phenylalanine 88 is modified to Phenylalanine amide. Positions 92-96 are excised as a propeptide; that stretch reads SEEKR. An Isoleucine amide modification is found at isoleucine 102. A propeptide spanning residues 106–110 is cleaved from the precursor; that stretch reads SEEKR. An Isoleucine amide modification is found at isoleucine 116. A propeptide spanning residues 120–123 is cleaved from the precursor; the sequence is KKKK.

Belongs to the frog skin active peptide (FSAP) family. Brevinin subfamily. In terms of tissue distribution, expressed by the skin glands.

Its subcellular location is the secreted. In terms of biological role, fallaxidin-1.1 shows no antibacterial activity against Gram-positive or Gram-negative bacteria. Does not inhibit the formation of NO by neuronal nitric oxide synthase. Has no effect on splenocyte proliferation or smooth muscle contraction. Its function is as follows. Fallaxidin-1.2 shows no antibacterial activity against Gram-positive or Gram-negative bacteria. Does not inhibit the formation of NO by neuronal nitric oxide synthase. Has no effect on splenocyte proliferation or smooth muscle contraction. Fallaxidin-1.3 shows no antibacterial activity against Gram-positive or Gram-negative bacteria. Does not inhibit the formation of NO by neuronal nitric oxide synthase. Has no effect on splenocyte proliferation or smooth muscle contraction. Functionally, fallaxidin-3.2 shows antibacterial activity against the Gram-positive bacteria E.faecalis (MIC=100 uM) and L.lactis (MIC=500 uM). No antibacterial activity against the Gram-positive bacteria B.cereus, L.innocua, M.luteus, S.epidermidis, S.uberis and S.aureus, or the Gram-negative bacteria E.cloacae and E.coli. The polypeptide is Preprofallaxidin-3 (Litoria fallax (Eastern dwarf tree frog)).